The sequence spans 294 residues: MGRQPCCDKLGVKKGPWTAEEDKKLISFILTNGQCCWRAVPKLAGLKRCGKSCRLRWTNYLRPDLKRGLLSDAEEKLVIDLHSRLGNRWSKIAARLPGRTDNEIKNHWNTHIKKKLLKMGIDPVTHEPLKKEANLSDQPTTESDQNKENGHQQVQVVPQSTNVTAAAATSTEFDNNSSFSSSASSSENSSCTTDESKLVFDNLSENDPLLSCLLEADTPLIDSPWEFPMSSTTTVEEPKSFDSIISNMTSWEDTFNWLSGYQEFGINDFGFDNCFNHVELDIFKTIDNVENRHG.

2 consecutive HTH myb-type domains span residues 9-61 (KLGV…TNYL) and 62-116 (RPDL…KKKL). 2 consecutive DNA-binding regions (H-T-H motif) follow at residues 37–61 (WRAV…TNYL) and 89–112 (WSKI…NTHI). Disordered regions lie at residues 128–152 (PLKK…NGHQ) and 171–191 (TEFD…NSSC).

Restricted to the petals, with the highest expression in the limb, probably in both epidermal and mesophyll cell layers.

It localises to the nucleus. R2R3 MYB-type transcription factor controlling the production of volatile organic compounds (VOCs), including floral volatile benzenoids and phenylpropanoids (FVBP), in flowers of fragrant cultivars (e.g. cv. Mitchell and cv. V26) by regulating the shikimate pathway, via the activation of several genes (e.g. EPSPS, ADT1, PAL1, CFAT and CCoAOMT1). This scent, mostly produced in the evening and night by the petals, attracts the pollinators (e.g. the night-active hawkmoth pollinator Manduca sexta). Promotes the expression of ABCG1 in petals three hours before the onset of volatile scent emission. Anthocyanins production is not controlled by ODO1 as color and scent are produced at different stages of development. Seems to trigger a negative feed-back loop that represses the expression of EOBI. The sequence is that of MYB-like transcription factor ODO1 from Petunia hybrida (Petunia).